The primary structure comprises 141 residues: Sec-independent protein translocase protein TatB (141 aa).

A helical membrane pass occupies residues 1-21 (MFGISFSELLLVGLVALLVLG). Residues 74 to 141 (EAQKLLAPLT…SPPSETPRNP (68 aa)) are disordered. The segment covering 89–115 (QETPPPAAESPAPSVPTPPPTSTPAVP) has biased composition (pro residues). Residues 116 to 129 (PADAAAPPAVAAST) are compositionally biased toward low complexity. Over residues 130–141 (PPSPPSETPRNP) the composition is skewed to pro residues.

This sequence belongs to the TatB family. The Tat system comprises two distinct complexes: a TatABC complex, containing multiple copies of TatA, TatB and TatC subunits, and a separate TatA complex, containing only TatA subunits. Substrates initially bind to the TatABC complex, which probably triggers association of the separate TatA complex to form the active translocon.

Its subcellular location is the cell inner membrane. Part of the twin-arginine translocation (Tat) system that transports large folded proteins containing a characteristic twin-arginine motif in their signal peptide across membranes. Together with TatC, TatB is part of a receptor directly interacting with Tat signal peptides. TatB may form an oligomeric binding site that transiently accommodates folded Tat precursor proteins before their translocation. The sequence is that of Sec-independent protein translocase protein TatB from Pseudomonas aeruginosa (strain ATCC 15692 / DSM 22644 / CIP 104116 / JCM 14847 / LMG 12228 / 1C / PRS 101 / PAO1).